Reading from the N-terminus, the 234-residue chain is Kappa-casein (234 aa).

The signal sequence occupies residues 1–21 (MMKSFLLVVNIVALTLPFLAA). Repeat copies occupy residues 127–153 (LGKA…QPTV), 154–179 (SAGD…EEAR), and 180–207 (ESPE…PRES). Residues 127–207 (LGKATILSTD…AVPSEEPRES (81 aa)) are 3 X 27 AA tandem repeats. The disordered stretch occupies residues 143–234 (QTPVSAAQPT…STGPAIASMA (92 aa)). T144 carries O-linked (GalNAc...) threonine glycosylation. The segment covering 144-171 (TPVSAAQPTVSAGDTPEVSSQFIDTPDT) has biased composition (polar residues). T158 carries the post-translational modification Phosphothreonine. S162 is subject to Phosphoserine; alternate. An O-linked (GalNAc...) serine; alternate glycan is attached at S162.

It belongs to the kappa-casein family. Mammary gland specific. Secreted in milk.

Its subcellular location is the secreted. In terms of biological role, kappa-casein stabilizes micelle formation, preventing casein precipitation in milk. The polypeptide is Kappa-casein (CSN3) (Cavia porcellus (Guinea pig)).